A 389-amino-acid chain; its full sequence is Nicotinate phosphoribosyltransferase (389 aa).

Position 211 is a phosphohistidine; by autocatalysis (histidine 211).

It belongs to the NAPRTase family. In terms of processing, transiently phosphorylated on a His residue during the reaction cycle. Phosphorylation strongly increases the affinity for substrates and increases the rate of nicotinate D-ribonucleotide production. Dephosphorylation regenerates the low-affinity form of the enzyme, leading to product release.

It catalyses the reaction nicotinate + 5-phospho-alpha-D-ribose 1-diphosphate + ATP + H2O = nicotinate beta-D-ribonucleotide + ADP + phosphate + diphosphate. It functions in the pathway cofactor biosynthesis; NAD(+) biosynthesis; nicotinate D-ribonucleotide from nicotinate: step 1/1. Its function is as follows. Catalyzes the synthesis of beta-nicotinate D-ribonucleotide from nicotinate and 5-phospho-D-ribose 1-phosphate at the expense of ATP. The polypeptide is Nicotinate phosphoribosyltransferase (Desulforapulum autotrophicum (strain ATCC 43914 / DSM 3382 / VKM B-1955 / HRM2) (Desulfobacterium autotrophicum)).